Reading from the N-terminus, the 540-residue chain is Glucose-6-phosphate isomerase (540 aa).

The Proton donor role is filled by Glu-350. Active-site residues include His-381 and Lys-503.

It belongs to the GPI family.

The protein localises to the cytoplasm. The catalysed reaction is alpha-D-glucose 6-phosphate = beta-D-fructose 6-phosphate. It participates in carbohydrate biosynthesis; gluconeogenesis. It functions in the pathway carbohydrate degradation; glycolysis; D-glyceraldehyde 3-phosphate and glycerone phosphate from D-glucose: step 2/4. Functionally, catalyzes the reversible isomerization of glucose-6-phosphate to fructose-6-phosphate. The protein is Glucose-6-phosphate isomerase of Burkholderia pseudomallei (strain 1710b).